A 410-amino-acid chain; its full sequence is Interstrand DNA cross-link repair glycosylase (410 aa).

Positions 45 to 47 (QID) match the QXD; important for activity motif.

It belongs to the DNA glycosylase AlkZ-like family.

Its function is as follows. DNA glycosylase involved in the repair of interstrand DNA cross-links (ICLs), which are highly toxic DNA lesions that covalently tether the opposing strands of DNA, thereby inhibiting essential cellular processes such as DNA replication and transcription. Acts by unhooking both sides of the ICLs, forming abasic (AP) sites on both strands. Unhooks ICLs derived from various cross-linking agents, including azinomycin B (AZB) and mechlorethamine, also known as nitrogen mustard (NM), protecting cells from the toxicity of these cross-linking agents. In vitro, also acts on monoadducts and can catalyze the excision of N7-methylguanine (7mGua) from an oligonucleotide containing N7-methyldeoxyguanosine (d7mG). Shows no unhooking activity toward FaPy-ICLs. The protein is Interstrand DNA cross-link repair glycosylase (ycaQ) of Escherichia coli (strain K12).